Reading from the N-terminus, the 318-residue chain is Cobalamin biosynthesis protein CobD (318 aa).

5 consecutive transmembrane segments (helical) span residues 51-71 (VGGVLLLLLAVGITAGAAWGA), 77-97 (LVHPLAGVVVSALLGWTCLAA), 153-173 (DGVIAPLLFFMIGGAPLALAY), 206-226 (LIPARLTGLLMTLAAPLAGLS), and 296-316 (MYGAECLLVLLAAVMTTILTI).

It belongs to the CobD/CbiB family.

The protein resides in the cell membrane. Its pathway is cofactor biosynthesis; adenosylcobalamin biosynthesis. Converts cobyric acid to cobinamide by the addition of aminopropanol on the F carboxylic group. The protein is Cobalamin biosynthesis protein CobD of Geobacter metallireducens (strain ATCC 53774 / DSM 7210 / GS-15).